The following is a 485-amino-acid chain: Glutamyl-tRNA(Gln) amidotransferase subunit A (485 aa).

Active-site charge relay system residues include Lys-79 and Ser-154. The active-site Acyl-ester intermediate is the Ser-178.

Belongs to the amidase family. GatA subfamily. Heterotrimer of A, B and C subunits.

It carries out the reaction L-glutamyl-tRNA(Gln) + L-glutamine + ATP + H2O = L-glutaminyl-tRNA(Gln) + L-glutamate + ADP + phosphate + H(+). Functionally, allows the formation of correctly charged Gln-tRNA(Gln) through the transamidation of misacylated Glu-tRNA(Gln) in organisms which lack glutaminyl-tRNA synthetase. The reaction takes place in the presence of glutamine and ATP through an activated gamma-phospho-Glu-tRNA(Gln). In Staphylococcus carnosus (strain TM300), this protein is Glutamyl-tRNA(Gln) amidotransferase subunit A.